Consider the following 100-residue polypeptide: Urease subunit gamma (100 aa).

Belongs to the urease gamma subunit family. Heterotrimer of UreA (gamma), UreB (beta) and UreC (alpha) subunits. Three heterotrimers associate to form the active enzyme.

It is found in the cytoplasm. The enzyme catalyses urea + 2 H2O + H(+) = hydrogencarbonate + 2 NH4(+). Its pathway is nitrogen metabolism; urea degradation; CO(2) and NH(3) from urea (urease route): step 1/1. The chain is Urease subunit gamma from Tolumonas auensis (strain DSM 9187 / NBRC 110442 / TA 4).